A 68-amino-acid chain; its full sequence is Large ribosomal subunit protein uL29 (68 aa).

This sequence belongs to the universal ribosomal protein uL29 family.

The chain is Large ribosomal subunit protein uL29 from Nitrobacter hamburgensis (strain DSM 10229 / NCIMB 13809 / X14).